A 295-amino-acid chain; its full sequence is ATP synthase gamma chain (295 aa).

The protein belongs to the ATPase gamma chain family. F-type ATPases have 2 components, CF(1) - the catalytic core - and CF(0) - the membrane proton channel. CF(1) has five subunits: alpha(3), beta(3), gamma(1), delta(1), epsilon(1). CF(0) has three main subunits: a, b and c.

Its subcellular location is the cell membrane. In terms of biological role, produces ATP from ADP in the presence of a proton gradient across the membrane. The gamma chain is believed to be important in regulating ATPase activity and the flow of protons through the CF(0) complex. In Desulforudis audaxviator (strain MP104C), this protein is ATP synthase gamma chain.